Reading from the N-terminus, the 370-residue chain is Glutamate 5-kinase (370 aa).

Lys17 contributes to the ATP binding site. 3 residues coordinate substrate: Ser57, Asp144, and Asn156. ATP-binding positions include 176–177 and 220–226; these read SD and TGGMVSK. The region spanning 282–360 is the PUA domain; that stretch reads SGTLTLDDGA…SDLPAEMRRP (79 aa).

It belongs to the glutamate 5-kinase family.

Its subcellular location is the cytoplasm. It carries out the reaction L-glutamate + ATP = L-glutamyl 5-phosphate + ADP. It participates in amino-acid biosynthesis; L-proline biosynthesis; L-glutamate 5-semialdehyde from L-glutamate: step 1/2. Functionally, catalyzes the transfer of a phosphate group to glutamate to form L-glutamate 5-phosphate. The protein is Glutamate 5-kinase of Mycolicibacterium gilvum (strain PYR-GCK) (Mycobacterium gilvum (strain PYR-GCK)).